The following is a 187-amino-acid chain: MNLQHHFLIAMPALQDPIFRRSVVYICEHNQDGAMGIIINKPLENLQIEGILEKLKITPEPRDSAIRLDKAVMLGGPLAEDRGFILHTPPSRFASSIRISDNTVITTSRDVLETLGTQQQPSDVLVALGYASWDKGQLEQELLDNAWLTAPADLNILFKTPIAERWREAAKLFGIDILTMPGVAGHA.

This sequence belongs to the UPF0301 (AlgH) family.

The chain is UPF0301 protein YqgE from Salmonella paratyphi B (strain ATCC BAA-1250 / SPB7).